Here is a 68-residue protein sequence, read N- to C-terminus: Small ribosomal subunit protein bS21 (68 aa).

Belongs to the bacterial ribosomal protein bS21 family.

The sequence is that of Small ribosomal subunit protein bS21 from Paracoccus denitrificans (strain Pd 1222).